The chain runs to 75 residues: Translational regulator CsrA (75 aa).

The protein belongs to the CsrA/RsmA family. Homodimer; the beta-strands of each monomer intercalate to form a hydrophobic core, while the alpha-helices form wings that extend away from the core. Interacts with FliW.

It is found in the cytoplasm. A translational regulator that binds mRNA to regulate translation initiation and/or mRNA stability. Usually binds in the 5'-UTR at or near the Shine-Dalgarno sequence preventing ribosome-binding, thus repressing translation. Its function is probably anatagonized by FliW. Inhibits translation of flaA mRNA in vitro. Involved in post-transcriptional regulation of flagellin biosynthesis. This chain is Translational regulator CsrA, found in Campylobacter jejuni subsp. jejuni serotype O:6 (strain 81116 / NCTC 11828).